The following is a 531-amino-acid chain: DnaJ homolog subfamily C member 21 (531 aa).

A J domain is found at 3 to 69 (CHYEALGVRR…QERAWYDNHR (67 aa)). Disordered regions lie at residues 279–311 (FGDG…AELY), 327–474 (KAMK…VPAE), and 502–531 (KATG…RKNR). The span at 281–311 (DGSDENEMEEHELKDEEDGKDSDEAEDAELY) shows a compositional bias: acidic residues. 2 positions are modified to phosphoserine: Ser-283 and Ser-302. The C2H2-type 1 zinc-finger motif lies at 314-338 (LYCPACDKSFKTEKAMKNHEKSKKH). The segment covering 364-375 (NPLDDNSEEEME) has biased composition (acidic residues). Residue Ser-370 is modified to Phosphoserine. The segment covering 381 to 392 (KLSKKQKKKKQK) has biased composition (basic residues). The segment covering 393–403 (PAQNYDDNFNV) has biased composition (polar residues). Positions 442-453 (KPCDDPKSEAKS) are enriched in basic and acidic residues. Over residues 455–464 (PKPKGKKTKD) the composition is skewed to basic residues. The C2H2-type 2 zinc finger occupies 482-506 (ISCTTCHSEFPSRNKLFDHLKATGH). Position 511 is a phosphoserine (Ser-511). Low complexity predominate over residues 511-522 (SSSSLNSATSSQ).

Interacts with HSPA8, PA2G4 and ZNF622. Expressed in brain, placenta, kidney and pancreas.

The protein resides in the cytoplasm. The protein localises to the nucleus. It is found in the nucleolus. Functionally, may act as a co-chaperone for HSP70. May play a role in ribosomal RNA (rRNA) biogenesis, possibly in the maturation of the 60S subunit. Binds the precursor 45S rRNA. The chain is DnaJ homolog subfamily C member 21 (DNAJC21) from Homo sapiens (Human).